The sequence spans 561 residues: Glutamate--tRNA ligase (561 aa).

A 'HIGH' region motif is present at residues 107–117 (PNPSGPLHLGH).

The protein belongs to the class-I aminoacyl-tRNA synthetase family. Glutamate--tRNA ligase type 2 subfamily.

The protein localises to the cytoplasm. The catalysed reaction is tRNA(Glu) + L-glutamate + ATP = L-glutamyl-tRNA(Glu) + AMP + diphosphate. Its function is as follows. Catalyzes the attachment of glutamate to tRNA(Glu) in a two-step reaction: glutamate is first activated by ATP to form Glu-AMP and then transferred to the acceptor end of tRNA(Glu). The polypeptide is Glutamate--tRNA ligase (Methanospirillum hungatei JF-1 (strain ATCC 27890 / DSM 864 / NBRC 100397 / JF-1)).